The primary structure comprises 118 residues: Large ribosomal subunit protein bL20 (118 aa).

It belongs to the bacterial ribosomal protein bL20 family.

Functionally, binds directly to 23S ribosomal RNA and is necessary for the in vitro assembly process of the 50S ribosomal subunit. It is not involved in the protein synthesizing functions of that subunit. This Photorhabdus laumondii subsp. laumondii (strain DSM 15139 / CIP 105565 / TT01) (Photorhabdus luminescens subsp. laumondii) protein is Large ribosomal subunit protein bL20.